A 365-amino-acid chain; its full sequence is Outer membrane lipoprotein A (365 aa).

The N-terminal stretch at 1–19 (MNIATKLMASLVASVVLTA) is a signal peptide. The segment at 19 to 121 (ACSGGGSSGS…KGEELSKDKS (103 aa)) is disordered. The N-palmitoyl cysteine moiety is linked to residue cysteine 20. The S-diacylglycerol cysteine moiety is linked to residue cysteine 20. Basic and acidic residues-rich tracts occupy residues 48–68 (EQPK…EPKE) and 105–121 (NPQK…KDKS).

The protein resides in the cell outer membrane. This Actinobacillus pleuropneumoniae (Haemophilus pleuropneumoniae) protein is Outer membrane lipoprotein A (omlA).